Consider the following 136-residue polypeptide: Histone H3.1/H3.2 (136 aa).

Residues 1-43 form a disordered region; the sequence is MARTKQTARKSTGGKAPRKQLASKAARKSAPSTGGVKKPHRYK. At Lys5 the chain carries N6,N6,N6-trimethyllysine; alternate. The residue at position 5 (Lys5) is an N6,N6-dimethyllysine; alternate. 2 positions are modified to N6-methyllysine; alternate: Lys5 and Lys10. Residue Lys10 is modified to N6-acetyllysine; alternate. Ser11 bears the Phosphoserine mark. Residue Lys15 is modified to N6,N6-dimethyllysine; alternate. N6-acetyllysine; alternate occurs at positions 15, 19, 24, 28, and 37. N6-methyllysine; alternate is present on residues Lys19, Lys24, Lys28, and Lys37. 2 positions are modified to N6,N6,N6-trimethyllysine; alternate: Lys28 and Lys37. N6,N6-dimethyllysine; alternate is present on residues Lys28 and Lys37. Residues Lys57 and Lys65 each carry the N6-acetyllysine modification. Position 80 is an N6,N6,N6-trimethyllysine; alternate (Lys80). At Lys80 the chain carries N6,N6-dimethyllysine; alternate. Lys80 bears the N6-methyllysine; alternate mark.

This sequence belongs to the histone H3 family. As to quaternary structure, the nucleosome is a histone octamer containing two molecules each of H2A, H2B, H3 and H4 assembled in one H3-H4 heterotetramer and two H2A-H2B heterodimers. The octamer wraps approximately 147 bp of DNA. In terms of processing, phosphorylated to form H3S10ph. H3S10ph promotes subsequent H3K14ac formation and is required for transcriptional activation through TBP recruitment to the promoters. Post-translationally, mono-, di- and trimethylated by the COMPASS complex to form H3K4me1/2/3. H3K4me activates gene expression by regulating transcription elongation and plays a role in telomere length maintenance. H3K4me enrichment correlates with transcription levels, and occurs in a 5' to 3' gradient with H3K4me3 enrichment at the 5'-end of genes, shifting to H3K4me2 and then H3K4me1. Methylated by SET2 to form H3K36me. H3K36me represses gene expression. Methylated by DOT1 to form H3K79me. H3K79me is required for association of SIR proteins with telomeric regions and for telomeric silencing. The COMPASS-mediated formation of H3K4me2/3 and the DOT1-mediated formation of H3K79me require H2BK123ub1. Acetylation of histone H3 leads to transcriptional activation. H3K14ac formation by GCN5 is promoted by H3S10ph. H3K14ac can also be formed by ESA1. H3K56ac formation occurs predominantly in newly synthesized H3 molecules during G1, S and G2/M of the cell cycle and may be involved in DNA repair.

It is found in the nucleus. The protein resides in the chromosome. Functionally, core component of nucleosome. Nucleosomes wrap and compact DNA into chromatin, limiting DNA accessibility to the cellular machineries which require DNA as a template. Histones thereby play a central role in transcription regulation, DNA repair, DNA replication and chromosomal stability. DNA accessibility is regulated via a complex set of post-translational modifications of histones, also called histone code, and nucleosome remodeling. In Meyerozyma guilliermondii (strain ATCC 6260 / CBS 566 / DSM 6381 / JCM 1539 / NBRC 10279 / NRRL Y-324) (Yeast), this protein is Histone H3.1/H3.2 (HHT1).